We begin with the raw amino-acid sequence, 265 residues long: Ribosomal RNA large subunit methyltransferase E (265 aa).

The S-adenosyl-L-methionine site is built by Gly-83, Trp-85, Asp-106, Asp-122, and Asp-146. Lys-186 serves as the catalytic Proton acceptor. The interval 230 to 265 (KGREAGPPSGGSERPVDVSKDLSARSDSEGPGDAEG) is disordered. Residues 243–257 (RPVDVSKDLSARSDS) show a composition bias toward basic and acidic residues.

The protein belongs to the class I-like SAM-binding methyltransferase superfamily. RNA methyltransferase RlmE family.

Its subcellular location is the cytoplasm. The enzyme catalyses uridine(2552) in 23S rRNA + S-adenosyl-L-methionine = 2'-O-methyluridine(2552) in 23S rRNA + S-adenosyl-L-homocysteine + H(+). Its function is as follows. Specifically methylates the uridine in position 2552 of 23S rRNA at the 2'-O position of the ribose in the fully assembled 50S ribosomal subunit. This is Ribosomal RNA large subunit methyltransferase E from Mesorhizobium japonicum (strain LMG 29417 / CECT 9101 / MAFF 303099) (Mesorhizobium loti (strain MAFF 303099)).